The chain runs to 614 residues: Vitamin B12 transporter BtuB (614 aa).

The signal sequence occupies residues methionine 1–alanine 20. The short motif at aspartate 26–asparagine 33 is the TonB box element. The TBDR plug domain maps to proline 38–threonine 152. Residues serine 85, asparagine 92, and valine 110–serine 111 contribute to the cyanocob(III)alamin site. One can recognise a TBDR beta-barrel domain in the interval asparagine 155–phenylalanine 614. Transmembrane regions (beta stranded) follow at residues threonine 158 to glycine 165, tyrosine 169 to glutamine 178, and threonine 184 to threonine 195. Ca(2+)-binding residues include aspartate 199, glutamine 211, aspartate 213, and aspartate 215. 2 beta stranded membrane-spanning segments follow: residues phenylalanine 217 to glutamate 227 and aspartate 232 to aspartate 248. The Ca(2+) site is built by tyrosine 249 and aspartate 250. Cyanocob(III)alamin is bound at residue alanine 251. A Ca(2+)-binding site is contributed by aspartate 261. A run of 14 beta stranded transmembrane segments spans residues arginine 263 to asparagine 277, glutamate 279 to asparagine 296, threonine 309 to valine 325, histidine 328 to tryptophan 337, tyrosine 353 to glycine 369, phenylalanine 371 to aspartate 381, phenylalanine 385 to isoleucine 400, tyrosine 403 to asparagine 417, lysine 434 to glutamate 443, valine 449 to asparagine 458, tyrosine 473 to phenylalanine 490, proline 494 to alanine 509, arginine 517 to tryptophan 529, and aspartate 535 to aspartate 550. Threonine 309 provides a ligand contact to cyanocob(III)alamin. Cyanocob(III)alamin is bound at residue arginine 517. Tyrosine 551 is a cyanocob(III)alamin binding site. 3 beta stranded membrane-spanning segments follow: residues threonine 558–alanine 572, isoleucine 585–valine 596, and alanine 602–phenylalanine 614. Positions tyrosine 597–phenylalanine 614 match the TonB C-terminal box motif.

It belongs to the TonB-dependent receptor family. BtuB (TC 1.B.14.3.1) subfamily.

Its subcellular location is the cell outer membrane. Involved in the active translocation of vitamin B12 (cyanocobalamin) across the outer membrane to the periplasmic space. It derives its energy for transport by interacting with the trans-periplasmic membrane protein TonB. This Salmonella typhimurium (strain LT2 / SGSC1412 / ATCC 700720) protein is Vitamin B12 transporter BtuB.